A 108-amino-acid polypeptide reads, in one-letter code: Thioredoxin (108 aa).

The Thioredoxin domain occupies 2–108; the sequence is SDAILYVSDD…QLTAFLDSQL (107 aa). Residues C33 and C36 are joined by a disulfide bond.

It belongs to the thioredoxin family.

In terms of biological role, component of the thioredoxin-thioredoxin reductase system. Participates in various redox reactions through the reversible oxidation of its active center dithiol to a disulfide and catalyzes dithiol-disulfide exchange reactions. This is Thioredoxin (trxA) from Acidithiobacillus ferridurans.